Consider the following 125-residue polypeptide: Egg cell-secreted protein 1.3 (125 aa).

Positions 1 to 24 (MASNTSFLFVTVTLLLVLNVSSRA) are cleaved as a signal peptide.

This sequence belongs to the plant egg cell-secreted peptide family. As to expression, restricted to female reproductive tissues, specifically accumulating in storage vesicles of the unfertilized egg cell.

Its subcellular location is the cytoplasmic vesicle. The protein resides in the secreted. In terms of biological role, involved in the regulation of gamete interactions during the double fertilization and to prevent multiple-pollen tube attraction; mediates the redistribution of the gamete fusogen HAP2/GCS1 to the cell surface after secretion upon sperm arrival. This Arabidopsis thaliana (Mouse-ear cress) protein is Egg cell-secreted protein 1.3 (EC1.3).